The sequence spans 310 residues: MKIIPIASESLGVRSLAVFVKVGKRGILIDPGAALGPKRYSLSPANSEMAALQLARSKIQEFAKKADVITISHYHYDHHTPFFEGIYESSSPEIAKELYSGKILLIKHPTQNINASQKRRAHEFLKNVEGIAKKIEYGDSKTFDFGDFKIEFSPPVPHGREGSKLGFVVMVLIDDGKKSVIHASDTQLINEKAVKWIIEKNPDLLIAGGPPTYLTHRVGNVRDIGRELINRIINETNAELIIDHHIVRDKGYEEFFNSLDKRPLTFAEFLGRENAPLEAYRKELHEFEKGKDVELPKGIVKFLKELGEQK.

Belongs to the UPF0282 family.

The sequence is that of UPF0282 protein PF0593 from Pyrococcus furiosus (strain ATCC 43587 / DSM 3638 / JCM 8422 / Vc1).